The sequence spans 477 residues: ETS translocation variant 1 (477 aa).

The residue at position 94 (S94) is a Phosphoserine. The disordered stretch occupies residues P128–S178. 2 positions are modified to phosphoserine; by RPS6KA1 and RPS6KA5: S191 and S216. A Glycyl lysine isopeptide (Lys-Gly) (interchain with G-Cter in SUMO2) cross-link involves residue K317. Positions L335–V415 form a DNA-binding region, ETS.

This sequence belongs to the ETS family. Post-translationally, sumoylated. In terms of processing, phosphorylated at Ser-191 and Ser-216 by RPS6KA1 and RPS6KA5; phosphorylation activates transcriptional activity.

It is found in the nucleus. Functionally, transcriptional activator that binds to DNA sequences containing the consensus pentanucleotide 5'-CGGA[AT]-3'. Required for olfactory dopaminergic neuron differentiation; may directly activate expression of tyrosine hydroxylase (TH). In Bos taurus (Bovine), this protein is ETS translocation variant 1 (ETV1).